Here is a 153-residue protein sequence, read N- to C-terminus: UPF0178 protein Sfum_1097 (153 aa).

Belongs to the UPF0178 family.

In Syntrophobacter fumaroxidans (strain DSM 10017 / MPOB), this protein is UPF0178 protein Sfum_1097.